We begin with the raw amino-acid sequence, 222 residues long: Protein ORM1 (222 aa).

Positions 1-57 (MTELDYQGTAEAASTSYSRNQTDLKPFPSAGSASSSIKTTEPVKDHRRRRSSSIISH) are disordered. The Cytoplasmic portion of the chain corresponds to 1-85 (MTELDYQGTA…NATWVDQRGA (85 aa)). The span at 12–23 (AASTSYSRNQTD) shows a compositional bias: polar residues. S29, S32, and S56 each carry phosphoserine. The helical transmembrane segment at 86-106 (WIIHVVIIILLKLFYNLFPGV) threads the bilayer. Residues 107–109 (TTE) are Extracellular-facing. A helical transmembrane segment spans residues 110–130 (WSWTLTNMTYVIGSYVMFHLI). The Cytoplasmic segment spans residues 131–162 (KGTPFDFNGGAYDNLTMWEQIDDETLYTPSRK). A helical transmembrane segment spans residues 163–183 (FLISVPIALFLVSTHYAHYDL). K184 is a topological domain (extracellular). The chain crosses the membrane as a helical span at residues 185-205 (LFSWNCFLTTFGAVVPKLPVT). Over 206-222 (HRLRISIPGITGRAQIS) the chain is Cytoplasmic.

Belongs to the ORM family. As to quaternary structure, component of the SPOTS complex, at least composed of LCB1/2 (LCB1 and/or LCB2), ORM1/2 (ORM1 and/or ORM2), SAC1 and TSC3. In terms of processing, phosphorylated in case of disruption of sphingolipid synthesis. Phosphorylation regulates inhibitory activity of serine palmitoyltransferases (LCB1 and LCB2).

Its subcellular location is the endoplasmic reticulum membrane. Its function is as follows. Component of the SPOTS complex that acts as a negative regulator of sphingolipid synthesis. Acts by inhibiting serine palmitoyltransferases (LCB1 and LCB2) activity. Along with ORM2, plays a role in the phosphorylation of LAC1 and YPK1, the distribution of actin patches between mother and daughter cells, and in endocytosis. Disruption or inhibition of sphingolipid synthesis leads to the activation and phosphorylation of YPK1 through the TORC2 and PKH1 pathways, which in turn phosphorylates ORM1 and LAG1 to activate sphingolipid synthesis. The sequence is that of Protein ORM1 (ORM1) from Saccharomyces cerevisiae (strain ATCC 204508 / S288c) (Baker's yeast).